The following is a 403-amino-acid chain: Phosphoglycerate kinase (403 aa).

Residues 22 to 24 (DFN), Arg-37, 60 to 63 (HFGR), Arg-119, and Arg-152 each bind substrate. Residues Lys-202, Glu-324, and 354–357 (GGDT) each bind ATP.

It belongs to the phosphoglycerate kinase family. Monomer.

It localises to the cytoplasm. The catalysed reaction is (2R)-3-phosphoglycerate + ATP = (2R)-3-phospho-glyceroyl phosphate + ADP. It functions in the pathway carbohydrate degradation; glycolysis; pyruvate from D-glyceraldehyde 3-phosphate: step 2/5. This chain is Phosphoglycerate kinase, found in Maricaulis maris (strain MCS10) (Caulobacter maris).